The following is a 403-amino-acid chain: Tyrosine--tRNA ligase (403 aa).

Residues 42–51 carry the 'HIGH' region motif; sequence PTAPDLHLGH. Residues 226-230 carry the 'KMSKS' region motif; that stretch reads KMSKS. Lys229 serves as a coordination point for ATP. An S4 RNA-binding domain is found at 339-400; sequence LRIASLLTAA…GKRNFARVAL (62 aa).

The protein belongs to the class-I aminoacyl-tRNA synthetase family. TyrS type 2 subfamily. Homodimer.

The protein resides in the cytoplasm. The catalysed reaction is tRNA(Tyr) + L-tyrosine + ATP = L-tyrosyl-tRNA(Tyr) + AMP + diphosphate + H(+). Catalyzes the attachment of tyrosine to tRNA(Tyr) in a two-step reaction: tyrosine is first activated by ATP to form Tyr-AMP and then transferred to the acceptor end of tRNA(Tyr). The chain is Tyrosine--tRNA ligase from Xanthomonas campestris pv. campestris (strain ATCC 33913 / DSM 3586 / NCPPB 528 / LMG 568 / P 25).